A 231-amino-acid polypeptide reads, in one-letter code: NADH-ubiquinone oxidoreductase chain 4 (231 aa).

6 helical membrane-spanning segments follow: residues 1–21, 34–54, 63–85, 89–111, 128–148, and 169–189; these read PIAG…YGII, MFLP…LTCL, IAYS…TPWG, AMAL…NTTY, ILPM…AIPP, and TIIM…HMFL.

This sequence belongs to the complex I subunit 4 family.

It localises to the mitochondrion membrane. The enzyme catalyses a ubiquinone + NADH + 5 H(+)(in) = a ubiquinol + NAD(+) + 4 H(+)(out). Its function is as follows. Core subunit of the mitochondrial membrane respiratory chain NADH dehydrogenase (Complex I) that is believed to belong to the minimal assembly required for catalysis. Complex I functions in the transfer of electrons from NADH to the respiratory chain. The immediate electron acceptor for the enzyme is believed to be ubiquinone. In Deinagkistrodon acutus (Hundred-pace snake), this protein is NADH-ubiquinone oxidoreductase chain 4 (MT-ND4).